The sequence spans 514 residues: Protein phosphatase 1H (514 aa).

Serine 7 carries the phosphoserine modification. The PPM-type phosphatase domain occupies 77 to 507; that stretch reads ATGYAEVINA…DDISVYVIPL (431 aa). Residues 109–135 form a disordered region; that stretch reads AVTSTPNRNSSKRRSSLPNGEGLQLKE. Threonine 113 is subject to Phosphothreonine. 2 positions are modified to phosphoserine: serine 124 and serine 211. Residue arginine 213 is modified to Omega-N-methylarginine. A Phosphoserine modification is found at serine 221. Position 224 is a phosphothreonine (threonine 224). Serine 422 carries the post-translational modification Phosphoserine.

This sequence belongs to the PP2C family.

It is found in the nucleus. Its subcellular location is the cytoplasm. The enzyme catalyses O-phospho-L-seryl-[protein] + H2O = L-seryl-[protein] + phosphate. It catalyses the reaction O-phospho-L-threonyl-[protein] + H2O = L-threonyl-[protein] + phosphate. In terms of biological role, dephosphorylates CDKN1B at 'Thr-187', thus removing a signal for proteasomal degradation. This is Protein phosphatase 1H (PPM1H) from Homo sapiens (Human).